A 155-amino-acid polypeptide reads, in one-letter code: SsrA-binding protein (155 aa).

This sequence belongs to the SmpB family.

The protein localises to the cytoplasm. Required for rescue of stalled ribosomes mediated by trans-translation. Binds to transfer-messenger RNA (tmRNA), required for stable association of tmRNA with ribosomes. tmRNA and SmpB together mimic tRNA shape, replacing the anticodon stem-loop with SmpB. tmRNA is encoded by the ssrA gene; the 2 termini fold to resemble tRNA(Ala) and it encodes a 'tag peptide', a short internal open reading frame. During trans-translation Ala-aminoacylated tmRNA acts like a tRNA, entering the A-site of stalled ribosomes, displacing the stalled mRNA. The ribosome then switches to translate the ORF on the tmRNA; the nascent peptide is terminated with the 'tag peptide' encoded by the tmRNA and targeted for degradation. The ribosome is freed to recommence translation, which seems to be the essential function of trans-translation. This Bordetella parapertussis (strain 12822 / ATCC BAA-587 / NCTC 13253) protein is SsrA-binding protein.